A 207-amino-acid polypeptide reads, in one-letter code: Large ribosomal subunit protein uL4 (207 aa).

Residues 45 to 78 are disordered; it reads RQGTHAVKNRSARRGGGRKPWRQKGTGRARQGSI. The span at 51–71 shows a compositional bias: basic residues; that stretch reads VKNRSARRGGGRKPWRQKGTG.

This sequence belongs to the universal ribosomal protein uL4 family. Part of the 50S ribosomal subunit.

Its function is as follows. One of the primary rRNA binding proteins, this protein initially binds near the 5'-end of the 23S rRNA. It is important during the early stages of 50S assembly. It makes multiple contacts with different domains of the 23S rRNA in the assembled 50S subunit and ribosome. Forms part of the polypeptide exit tunnel. The sequence is that of Large ribosomal subunit protein uL4 from Lactiplantibacillus plantarum (strain ATCC BAA-793 / NCIMB 8826 / WCFS1) (Lactobacillus plantarum).